The primary structure comprises 197 residues: Ubiquitin-conjugating enzyme E2 T (197 aa).

Positions 2 to 152 (QRASRLKREL…ARQWTEKHAR (151 aa)) constitute a UBC core domain. C86 (glycyl thioester intermediate) is an active-site residue. Glycyl lysine isopeptide (Lys-Gly) (interchain with G-Cter in ubiquitin) cross-links involve residues K91 and K182. Positions 149–197 (KHARQKQKADEEEMLDNLPEAGDSRVHNSTQKRKASQLVGIEKKFHPDV) are disordered. Residue S184 is modified to Phosphoserine. Residues K191 and K192 each participate in a glycyl lysine isopeptide (Lys-Gly) (interchain with G-Cter in SUMO2) cross-link.

The protein belongs to the ubiquitin-conjugating enzyme family. As to quaternary structure, directly interacts with FANCL. Interacts with BRCA1. Post-translationally, auto-ubiquitinated. Effects of auto-monoubiquitination at Lys-91 and Lys-182 are unclear: according to a report, monoubiquitination inactivates E2 enzyme activity. In contrast, according to another report, autoubiquitination does not affect E2 enzyme activity.

It localises to the nucleus. It catalyses the reaction S-ubiquitinyl-[E1 ubiquitin-activating enzyme]-L-cysteine + [E2 ubiquitin-conjugating enzyme]-L-cysteine = [E1 ubiquitin-activating enzyme]-L-cysteine + S-ubiquitinyl-[E2 ubiquitin-conjugating enzyme]-L-cysteine.. Its pathway is protein modification; protein ubiquitination. Functionally, accepts ubiquitin from the E1 complex and catalyzes its covalent attachment to other proteins. Catalyzes monoubiquitination. Involved in mitomycin-C (MMC)-induced DNA repair. Acts as a specific E2 ubiquitin-conjugating enzyme for the Fanconi anemia complex by associating with E3 ubiquitin-protein ligase FANCL and catalyzing monoubiquitination of FANCD2, a key step in the DNA damage pathway. Also mediates monoubiquitination of FANCL and FANCI. May contribute to ubiquitination and degradation of BRCA1. In vitro able to promote polyubiquitination using all 7 ubiquitin Lys residues, but may prefer 'Lys-11'-, 'Lys-27'-, 'Lys-48'- and 'Lys-63'-linked polyubiquitination. In Homo sapiens (Human), this protein is Ubiquitin-conjugating enzyme E2 T (UBE2T).